The sequence spans 727 residues: Capsid protein VP1 (727 aa).

The span at Met1–Arg10 shows a compositional bias: basic residues. Disordered stretches follow at residues Met1–Ala38 and Val95–Ser184. The short motif at Pro4–Val13 is the Nuclear localization signal element. The segment at Tyr19–Asp64 is phospholipase A2-like. Polar residues predominate over residues Ser25–Ser35. Positions Ser166–Ile183 are enriched in gly residues. Residue Asn323 coordinates Mg(2+). Residues Ala507 to Glu536 form a disordered region. Cys633 and Cys637 are oxidised to a cystine.

The protein belongs to the parvoviridae capsid protein family. In terms of assembly, interacts with host TFRC.

The protein localises to the virion. The protein resides in the host nucleus. Functionally, capsid protein self-assembles to form an icosahedral capsid with a T=1 symmetry, about 22 nm in diameter, and consisting of 60 copies of two size variants of the capsid proteins, VP1 and VP2, which differ by the presence of an N-terminal extension in the minor protein VP1. The capsid encapsulates the genomic ssDNA. Capsid proteins are responsible for the attachment to host cell receptor TFRC. This attachment induces virion internalization predominantly through clathrin-dependent endocytosis. Binding to the host receptors also induces capsid rearrangements leading to surface exposure of VP1 N-terminus. This Feline panleukopenia virus (FPV) protein is Capsid protein VP1.